A 239-amino-acid polypeptide reads, in one-letter code: Purine nucleoside phosphorylase DeoD-type (239 aa).

Histidine 5 lines the a purine D-ribonucleoside pocket. Residues glycine 21, arginine 25, arginine 44, and 88-91 (RVGS) each bind phosphate. Residues 180–182 (EME) and 204–205 (SD) each bind a purine D-ribonucleoside. Aspartate 205 functions as the Proton donor in the catalytic mechanism.

The protein belongs to the PNP/UDP phosphorylase family. As to quaternary structure, homohexamer; trimer of homodimers.

It carries out the reaction a purine D-ribonucleoside + phosphate = a purine nucleobase + alpha-D-ribose 1-phosphate. The catalysed reaction is a purine 2'-deoxy-D-ribonucleoside + phosphate = a purine nucleobase + 2-deoxy-alpha-D-ribose 1-phosphate. Functionally, catalyzes the reversible phosphorolytic breakdown of the N-glycosidic bond in the beta-(deoxy)ribonucleoside molecules, with the formation of the corresponding free purine bases and pentose-1-phosphate. The polypeptide is Purine nucleoside phosphorylase DeoD-type (Erwinia tasmaniensis (strain DSM 17950 / CFBP 7177 / CIP 109463 / NCPPB 4357 / Et1/99)).